The primary structure comprises 505 residues: Cytochrome P450 CYP71D313 (505 aa).

Residues Met1 to Phe21 form a helical membrane-spanning segment. Cys441 contributes to the heme binding site. The chain crosses the membrane as a helical span at residues Pro442–Phe462.

It belongs to the cytochrome P450 family. It depends on heme as a cofactor.

It is found in the membrane. In terms of biological role, probable heme-thiolate monooxygenase. This is Cytochrome P450 CYP71D313 from Panax ginseng (Korean ginseng).